We begin with the raw amino-acid sequence, 287 residues long: MNSMPHTESNILQVERNIEQIDIKGQYINLASPIHLSGQINITELFAEYSKNIAQSDTGSALQIGVDEAGRGPLLGSVNVASAILPRAWSGLIEAQLLKDTPLSILTDSKQLSEKKRDLLYPLVQQYAIGYIIADIPAAVIDQINILQATMLGMRLCTEILLEVIAHHLNDMAQDIHQLQTAVLFDGNRCPELNYTSLAQLGIKESMIDCQAWVKGDARHTSIAAASILAKVSRDKTMYALDTEHPEYGIAKHKGYPTRAHMEAIETYGVLSAHRRSFAPVRKALES.

The RNase H type-2 domain maps to 61 to 287 (ALQIGVDEAG…FAPVRKALES (227 aa)). Residues aspartate 67, glutamate 68, and aspartate 186 each contribute to the a divalent metal cation site.

Belongs to the RNase HII family. It depends on Mn(2+) as a cofactor. Mg(2+) is required as a cofactor.

It localises to the cytoplasm. The enzyme catalyses Endonucleolytic cleavage to 5'-phosphomonoester.. In terms of biological role, endonuclease that specifically degrades the RNA of RNA-DNA hybrids. This chain is Ribonuclease HII, found in Psychrobacter arcticus (strain DSM 17307 / VKM B-2377 / 273-4).